The following is a 345-amino-acid chain: tRNA pseudouridine synthase B (345 aa).

The interval 1–33 (MGGNSQPHQEPRRVNNDPRAKQQKGNQVRRDRR) is disordered. Residues 9 to 20 (QEPRRVNNDPRA) are compositionally biased toward basic and acidic residues. Residue aspartate 72 is the Nucleophile of the active site.

This sequence belongs to the pseudouridine synthase TruB family. Type 1 subfamily.

The catalysed reaction is uridine(55) in tRNA = pseudouridine(55) in tRNA. Functionally, responsible for synthesis of pseudouridine from uracil-55 in the psi GC loop of transfer RNAs. The chain is tRNA pseudouridine synthase B from Bradyrhizobium diazoefficiens (strain JCM 10833 / BCRC 13528 / IAM 13628 / NBRC 14792 / USDA 110).